The sequence spans 410 residues: Putative competence-damage inducible protein (410 aa).

It belongs to the CinA family.

This Finegoldia magna (strain ATCC 29328 / DSM 20472 / WAL 2508) (Peptostreptococcus magnus) protein is Putative competence-damage inducible protein.